Here is a 225-residue protein sequence, read N- to C-terminus: Single-pass membrane and coiled-coil domain-containing protein 3 (225 aa).

Positions 69-92 (IIQAMTKIQKELQKIDEALKDQLE) form a coiled coil. Residues 155-175 (IGTSLLGSIGVAVLSLGIDMI) form a helical membrane-spanning segment. The stretch at 182-209 (AVERTQLQAAIKSYEKHLEEFKAASAKY) forms a coiled coil.

The protein localises to the membrane. The sequence is that of Single-pass membrane and coiled-coil domain-containing protein 3 (Smco3) from Mus musculus (Mouse).